Here is a 237-residue protein sequence, read N- to C-terminus: Phosphoribosylaminoimidazole-succinocarboxamide synthase (237 aa).

The protein belongs to the SAICAR synthetase family.

The catalysed reaction is 5-amino-1-(5-phospho-D-ribosyl)imidazole-4-carboxylate + L-aspartate + ATP = (2S)-2-[5-amino-1-(5-phospho-beta-D-ribosyl)imidazole-4-carboxamido]succinate + ADP + phosphate + 2 H(+). It participates in purine metabolism; IMP biosynthesis via de novo pathway; 5-amino-1-(5-phospho-D-ribosyl)imidazole-4-carboxamide from 5-amino-1-(5-phospho-D-ribosyl)imidazole-4-carboxylate: step 1/2. This Baumannia cicadellinicola subsp. Homalodisca coagulata protein is Phosphoribosylaminoimidazole-succinocarboxamide synthase.